We begin with the raw amino-acid sequence, 471 residues long: tRNA-2-methylthio-N(6)-dimethylallyladenosine synthase (471 aa).

Residues 31–149 (LYYHIETYGC…FPQLLWEALN (119 aa)) enclose the MTTase N-terminal domain. 6 residues coordinate [4Fe-4S] cluster: Cys40, Cys76, Cys110, Cys186, Cys190, and Cys193. In terms of domain architecture, Radical SAM core spans 172–402 (RDSNLKAWVN…IELQNKISLE (231 aa)). Residues 405 to 468 (AELRGKIVEV…AWTMQGELVE (64 aa)) form the TRAM domain.

The protein belongs to the methylthiotransferase family. MiaB subfamily. As to quaternary structure, monomer. Requires [4Fe-4S] cluster as cofactor.

The protein localises to the cytoplasm. The enzyme catalyses N(6)-dimethylallyladenosine(37) in tRNA + (sulfur carrier)-SH + AH2 + 2 S-adenosyl-L-methionine = 2-methylsulfanyl-N(6)-dimethylallyladenosine(37) in tRNA + (sulfur carrier)-H + 5'-deoxyadenosine + L-methionine + A + S-adenosyl-L-homocysteine + 2 H(+). In terms of biological role, catalyzes the methylthiolation of N6-(dimethylallyl)adenosine (i(6)A), leading to the formation of 2-methylthio-N6-(dimethylallyl)adenosine (ms(2)i(6)A) at position 37 in tRNAs that read codons beginning with uridine. This is tRNA-2-methylthio-N(6)-dimethylallyladenosine synthase from Thermoanaerobacter sp. (strain X514).